The primary structure comprises 1385 residues: PsbD mRNA maturation factor Nac2, chloroplastic (1385 aa).

Residues 1–45 (MGALPCPAHIEHHQGLSSFGTRRVLRQSVACGAHRSRRRSLWAGA) constitute a chloroplast transit peptide. A compositionally biased stretch (low complexity) spans 132–152 (GPHGAASATGAGSHSSSAGAP). Disordered regions lie at residues 132 to 157 (GPHG…PTPR), 263 to 282 (AVAA…RSSA), 304 to 360 (TSSR…AAGP), 387 to 502 (RQQP…GHGQ), 546 to 568 (NGAG…SGTS), 726 to 756 (HADS…VAAA), and 840 to 899 (ARRA…APSA). Basic and acidic residues predominate over residues 271–281 (QPHEHQQERSS). Low complexity predominate over residues 304–313 (TSSRRGGRSS). A compositionally biased stretch (gly residues) spans 403-412 (NGSGKSGSGG). Composition is skewed to low complexity over residues 448–464 (APAA…RPAA), 554–568 (ASAS…SGTS), 729–744 (SSSS…SSSG), and 854–893 (ASTT…AAAG). TPR repeat units lie at residues 851-884 (RRGA…DPAS), 951-984 (GAVM…CPAD), 985-1018 (VALY…DRTD), 1019-1052 (KQLF…HPLN), 1053-1086 (TKII…DPLS), 1091-1124 (VHNR…HPNS), 1125-1158 (AALL…AGAF), 1160-1193 (AAVM…KQLN), and 1205-1238 (AWRA…APAV). Disordered regions lie at residues 1237-1257 (AVRG…GRRP) and 1333-1385 (IQDP…ADDM). Over residues 1356-1365 (QDADYYEEPE) the composition is skewed to acidic residues. Residues 1374-1385 (AVRRPMPDADDM) show a composition bias toward basic and acidic residues.

In terms of assembly, part of 2 complexes of about 600 and less than 2000 kDa, both of which also contain non-polysomal RNA.

Its subcellular location is the plastid. It localises to the chloroplast stroma. Its function is as follows. Involved, directly or indirectly, in the processing of the chloroplast encoded psbD mRNA to its mature form, acting via the 5'-UTR of the psbD mRNA. The last 588 amino acids of the protein are sufficient to confer stability on the transcript in vivo. The polypeptide is PsbD mRNA maturation factor Nac2, chloroplastic (NAC2) (Chlamydomonas reinhardtii (Chlamydomonas smithii)).